The following is a 348-amino-acid chain: MSDRLTLLRPDDWHIHLRDGAVLPHTVGDVARTFARAIIMPNLVPPVRNAAEAGAYRERILAARPAGSRFEPLMVLYLTDRTSPEDVRAAKASGIVYAAKLYPAGATTNSDSGVTSIDNIFPAIEALAEVGMPLLVHGEVTRSEIDVFDREKRFIDEHMRRVVERFPTLKVVFEHITTSDAAQFVTEAPANVGATITAQHLLYNRNHMLVGGIRPHFYCLPILKRNTHQVALLDAATSGNPKFFLGTDSAPHARHAKEAACGCAGCYTAYAAIEMYAEAFEQRNALDKLEGFASLHGPAFYGLPANTDTITLVREEWTAPDSLPFGEQTVVPLRAGEKLRWRLLEENA.

Positions 14 and 16 each coordinate Zn(2+). Substrate is bound by residues 16–18 and Asn42; that span reads HLR. Lys100, His137, and His175 together coordinate Zn(2+). N6-carboxylysine is present on Lys100. Substrate is bound at residue His137. Leu220 serves as a coordination point for substrate. Position 248 (Asp248) interacts with Zn(2+). Asp248 is an active-site residue. Positions 252 and 264 each coordinate substrate.

The protein belongs to the metallo-dependent hydrolases superfamily. DHOase family. Class II DHOase subfamily. Homodimer. It depends on Zn(2+) as a cofactor.

It catalyses the reaction (S)-dihydroorotate + H2O = N-carbamoyl-L-aspartate + H(+). The protein operates within pyrimidine metabolism; UMP biosynthesis via de novo pathway; (S)-dihydroorotate from bicarbonate: step 3/3. Catalyzes the reversible cyclization of carbamoyl aspartate to dihydroorotate. The protein is Dihydroorotase of Pseudomonas putida (strain GB-1).